Reading from the N-terminus, the 198-residue chain is FMN-dependent NADH:quinone oxidoreductase (198 aa).

FMN-binding positions include serine 10, 16–18 (SQS), 94–97 (MYNF), and 138–141 (TRGG).

The protein belongs to the azoreductase type 1 family. As to quaternary structure, homodimer. It depends on FMN as a cofactor.

It catalyses the reaction 2 a quinone + NADH + H(+) = 2 a 1,4-benzosemiquinone + NAD(+). The catalysed reaction is N,N-dimethyl-1,4-phenylenediamine + anthranilate + 2 NAD(+) = 2-(4-dimethylaminophenyl)diazenylbenzoate + 2 NADH + 2 H(+). Quinone reductase that provides resistance to thiol-specific stress caused by electrophilic quinones. In terms of biological role, also exhibits azoreductase activity. Catalyzes the reductive cleavage of the azo bond in aromatic azo compounds to the corresponding amines. The sequence is that of FMN-dependent NADH:quinone oxidoreductase from Shewanella baltica (strain OS223).